The following is a 90-amino-acid chain: Arminin 45266 (90 aa).

A signal peptide spans 1–20 (MKSASLILFVALVALTYARS). Residues 21 to 59 (YEDVKEEIKNEVEKEILDDLEEENDELDDNTQEVNDPRA) constitute a propeptide that is removed on maturation. T87 is subject to Threonine amide.

The protein belongs to the arminin family. Expressed in entodermal epithelium along the body column.

The protein resides in the secreted. It localises to the target cell membrane. Functionally, antimicrobial peptide with a broad-spectrum antimicrobial activity. Keeps its antibacterial activity under a wide range of salt concentrations that mimic physiological conditions of human blood, which is surprising, since Hydra is an obligate freshwater animal with nearly no salt tolerance. Does not affect red blood cells. The sequence is that of Arminin 45266 from Hydra vulgaris (Hydra).